The primary structure comprises 297 residues: Probable endonuclease 4 (297 aa).

Positions 69, 110, 145, 179, 182, 214, 227, 229, and 259 each coordinate Zn(2+).

The protein belongs to the AP endonuclease 2 family. Requires Zn(2+) as cofactor.

It carries out the reaction Endonucleolytic cleavage to 5'-phosphooligonucleotide end-products.. Endonuclease IV plays a role in DNA repair. It cleaves phosphodiester bonds at apurinic or apyrimidinic (AP) sites, generating a 3'-hydroxyl group and a 5'-terminal sugar phosphate. The protein is Probable endonuclease 4 of Listeria innocua serovar 6a (strain ATCC BAA-680 / CLIP 11262).